We begin with the raw amino-acid sequence, 309 residues long: Homoserine O-succinyltransferase (309 aa).

Cys-142 serves as the catalytic Acyl-thioester intermediate. Residues Lys-163 and Ser-192 each contribute to the substrate site. The active-site Proton acceptor is His-235. Residue Glu-237 is part of the active site. Arg-249 lines the substrate pocket.

It belongs to the MetA family.

Its subcellular location is the cytoplasm. The enzyme catalyses L-homoserine + succinyl-CoA = O-succinyl-L-homoserine + CoA. The protein operates within amino-acid biosynthesis; L-methionine biosynthesis via de novo pathway; O-succinyl-L-homoserine from L-homoserine: step 1/1. Transfers a succinyl group from succinyl-CoA to L-homoserine, forming succinyl-L-homoserine. The sequence is that of Homoserine O-succinyltransferase from Erwinia tasmaniensis (strain DSM 17950 / CFBP 7177 / CIP 109463 / NCPPB 4357 / Et1/99).